The primary structure comprises 340 residues: Sulfotransferase ppzF (340 aa).

It functions in the pathway secondary metabolite biosynthesis. Sulfotransferase; part of the gene cluster that mediates the biosynthesis of pyrrolopyrazines, secondary metabolites showing insecticidal activity. The role of ppzF within the pathway has still to be determined. The single multifunctional NRPS ppzA is sufficient to produce peramine via condensation of 1-pyrroline-5-carboxylate and arginine, N-methylation of the alpha-amino group of arginine and reduction of the thioester and the cyclization to form an iminium ion resulting in release from the peptide synthetase. Deprotonation of this intermediate and oxidation of the pyrroline ring would give rise to peramine. In Epichloe species that produce only peramine, the peramine synthetase gene is not localized in a gene cluster, in contrast to Metarhizium species that contain additional pyrrolopyrazine biosynthesis genes. The 2-oxoglutarate-Fe(II) type oxidoreductase ppzC hydroxylates peramine to yield the newly identified compound 8-hydroxyperamine whereas ppzD converts L-proline into trans-4-hydroxy-L-proline, a precursor of peramine biosynthesis. The protein is Sulfotransferase ppzF of Metarhizium majus (strain ARSEF 297).